A 242-amino-acid chain; its full sequence is Ribonuclease 3 (242 aa).

One can recognise an RNase III domain in the interval 7-136 (LEALQNLLGY…LLASIYLDGG (130 aa)). Glu-49 contributes to the Mg(2+) binding site. The active site involves Asp-53. Asp-122 and Glu-125 together coordinate Mg(2+). The active site involves Glu-125. The DRBM domain occupies 167 to 236 (DYKTQLQELT…AEKALQIIAA (70 aa)).

The protein belongs to the ribonuclease III family. In terms of assembly, homodimer. The cofactor is Mg(2+).

It localises to the cytoplasm. The catalysed reaction is Endonucleolytic cleavage to 5'-phosphomonoester.. Digests double-stranded RNA. Involved in the processing of primary rRNA transcript to yield the immediate precursors to the large and small rRNAs (23S and 16S). Processes some mRNAs, and tRNAs when they are encoded in the rRNA operon. Processes pre-crRNA and tracrRNA of type II CRISPR loci if present in the organism. In Syntrophobacter fumaroxidans (strain DSM 10017 / MPOB), this protein is Ribonuclease 3.